A 94-amino-acid chain; its full sequence is Large ribosomal subunit protein eL43B (94 aa).

A C4-type zinc finger spans residues 39–62 (CPFCGRLTVKRTAAGIWKCSGKGC).

The protein belongs to the eukaryotic ribosomal protein eL43 family. As to quaternary structure, component of the large ribosomal subunit (LSU). Mature yeast ribosomes consist of a small (40S) and a large (60S) subunit. The 40S small subunit contains 1 molecule of ribosomal RNA (18S rRNA) and at least 33 different proteins. The large 60S subunit contains 3 rRNA molecules (25S, 5.8S and 5S rRNA) and at least 46 different proteins.

It is found in the cytoplasm. In terms of biological role, component of the ribosome, a large ribonucleoprotein complex responsible for the synthesis of proteins in the cell. The small ribosomal subunit (SSU) binds messenger RNAs (mRNAs) and translates the encoded message by selecting cognate aminoacyl-transfer RNA (tRNA) molecules. The large subunit (LSU) contains the ribosomal catalytic site termed the peptidyl transferase center (PTC), which catalyzes the formation of peptide bonds, thereby polymerizing the amino acids delivered by tRNAs into a polypeptide chain. The nascent polypeptides leave the ribosome through a tunnel in the LSU and interact with protein factors that function in enzymatic processing, targeting, and the membrane insertion of nascent chains at the exit of the ribosomal tunnel. The protein is Large ribosomal subunit protein eL43B (rpl4302) of Schizosaccharomyces pombe (strain 972 / ATCC 24843) (Fission yeast).